The following is a 331-amino-acid chain: 4-hydroxythreonine-4-phosphate dehydrogenase (331 aa).

Residues His-137 and Thr-138 each contribute to the substrate site. 3 residues coordinate a divalent metal cation: His-167, His-212, and His-267. Residues Lys-275, Asn-284, and Arg-293 each coordinate substrate.

Belongs to the PdxA family. In terms of assembly, homodimer. Requires Zn(2+) as cofactor. Mg(2+) serves as cofactor. Co(2+) is required as a cofactor.

Its subcellular location is the cytoplasm. The enzyme catalyses 4-(phosphooxy)-L-threonine + NAD(+) = 3-amino-2-oxopropyl phosphate + CO2 + NADH. It functions in the pathway cofactor biosynthesis; pyridoxine 5'-phosphate biosynthesis; pyridoxine 5'-phosphate from D-erythrose 4-phosphate: step 4/5. Its function is as follows. Catalyzes the NAD(P)-dependent oxidation of 4-(phosphooxy)-L-threonine (HTP) into 2-amino-3-oxo-4-(phosphooxy)butyric acid which spontaneously decarboxylates to form 3-amino-2-oxopropyl phosphate (AHAP). The chain is 4-hydroxythreonine-4-phosphate dehydrogenase from Yersinia enterocolitica serotype O:8 / biotype 1B (strain NCTC 13174 / 8081).